The sequence spans 426 residues: UDP-N-acetylglucosamine 1-carboxyvinyltransferase (426 aa).

22–23 (KN) is a phosphoenolpyruvate binding site. R99 is a UDP-N-acetyl-alpha-D-glucosamine binding site. C123 acts as the Proton donor in catalysis. C123 carries the post-translational modification 2-(S-cysteinyl)pyruvic acid O-phosphothioketal. UDP-N-acetyl-alpha-D-glucosamine-binding positions include 128-132 (RPIDL), D313, and I335.

It belongs to the EPSP synthase family. MurA subfamily.

The protein resides in the cytoplasm. It catalyses the reaction phosphoenolpyruvate + UDP-N-acetyl-alpha-D-glucosamine = UDP-N-acetyl-3-O-(1-carboxyvinyl)-alpha-D-glucosamine + phosphate. It functions in the pathway cell wall biogenesis; peptidoglycan biosynthesis. In terms of biological role, cell wall formation. Adds enolpyruvyl to UDP-N-acetylglucosamine. The sequence is that of UDP-N-acetylglucosamine 1-carboxyvinyltransferase from Zymomonas mobilis subsp. mobilis (strain ATCC 31821 / ZM4 / CP4).